Reading from the N-terminus, the 346-residue chain is tRNA N6-adenosine threonylcarbamoyltransferase (346 aa).

The Fe cation site is built by H117 and H121. Substrate is bound by residues Q139 to G143, D172, G185, D189, and N278. A Fe cation-binding site is contributed by D308.

It belongs to the KAE1 / TsaD family. The cofactor is Fe(2+).

It is found in the cytoplasm. It carries out the reaction L-threonylcarbamoyladenylate + adenosine(37) in tRNA = N(6)-L-threonylcarbamoyladenosine(37) in tRNA + AMP + H(+). Functionally, required for the formation of a threonylcarbamoyl group on adenosine at position 37 (t(6)A37) in tRNAs that read codons beginning with adenine. Is involved in the transfer of the threonylcarbamoyl moiety of threonylcarbamoyl-AMP (TC-AMP) to the N6 group of A37, together with TsaE and TsaB. TsaD likely plays a direct catalytic role in this reaction. The polypeptide is tRNA N6-adenosine threonylcarbamoyltransferase (Lactobacillus delbrueckii subsp. bulgaricus (strain ATCC 11842 / DSM 20081 / BCRC 10696 / JCM 1002 / NBRC 13953 / NCIMB 11778 / NCTC 12712 / WDCM 00102 / Lb 14)).